Reading from the N-terminus, the 203-residue chain is Large ribosomal subunit protein uL3 (203 aa).

It belongs to the universal ribosomal protein uL3 family. Part of the 50S ribosomal subunit. Forms a cluster with proteins L14 and L19.

In terms of biological role, one of the primary rRNA binding proteins, it binds directly near the 3'-end of the 23S rRNA, where it nucleates assembly of the 50S subunit. This Christiangramia forsetii (strain DSM 17595 / CGMCC 1.15422 / KT0803) (Gramella forsetii) protein is Large ribosomal subunit protein uL3.